The sequence spans 265 residues: 5'-nucleotidase SurE (265 aa).

Residues aspartate 8, aspartate 9, serine 39, and asparagine 96 each contribute to the a divalent metal cation site.

This sequence belongs to the SurE nucleotidase family. It depends on a divalent metal cation as a cofactor.

It is found in the cytoplasm. It carries out the reaction a ribonucleoside 5'-phosphate + H2O = a ribonucleoside + phosphate. In terms of biological role, nucleotidase that shows phosphatase activity on nucleoside 5'-monophosphates. The polypeptide is 5'-nucleotidase SurE (Dehalococcoides mccartyi (strain ATCC BAA-2266 / KCTC 15142 / 195) (Dehalococcoides ethenogenes (strain 195))).